Reading from the N-terminus, the 433-residue chain is Oxysterol-binding protein-like protein OBPa (433 aa).

It belongs to the OSBP family.

The protein is Oxysterol-binding protein-like protein OBPa (OBPA) of Candida albicans (strain SC5314 / ATCC MYA-2876) (Yeast).